The sequence spans 352 residues: Speedy protein E18 (352 aa).

Positions 1–12 (MDRTKTRFRKRG) are enriched in basic residues. Residues 1-90 (MDRTKTRFRK…EPEKELAPEP (90 aa)) are disordered. The segment covering 16 to 39 (GKITTSRQPHPQNEQSLQRSTSGY) has biased composition (polar residues). A compositionally biased stretch (acidic residues) spans 76 to 90 (DESEEEPEKELAPEP).

The protein belongs to the Speedy/Ringo family.

The protein is Speedy protein E18 of Homo sapiens (Human).